Consider the following 288-residue polypeptide: Ribosomal RNA small subunit methyltransferase A (288 aa).

Residues Asn37, Leu39, Gly64, Glu86, Asp112, and Asn131 each coordinate S-adenosyl-L-methionine.

This sequence belongs to the class I-like SAM-binding methyltransferase superfamily. rRNA adenine N(6)-methyltransferase family. RsmA subfamily.

It localises to the cytoplasm. The enzyme catalyses adenosine(1518)/adenosine(1519) in 16S rRNA + 4 S-adenosyl-L-methionine = N(6)-dimethyladenosine(1518)/N(6)-dimethyladenosine(1519) in 16S rRNA + 4 S-adenosyl-L-homocysteine + 4 H(+). Its function is as follows. Specifically dimethylates two adjacent adenosines (A1518 and A1519) in the loop of a conserved hairpin near the 3'-end of 16S rRNA in the 30S particle. May play a critical role in biogenesis of 30S subunits. This Rhodospirillum rubrum (strain ATCC 11170 / ATH 1.1.1 / DSM 467 / LMG 4362 / NCIMB 8255 / S1) protein is Ribosomal RNA small subunit methyltransferase A.